A 162-amino-acid chain; its full sequence is Endoribonuclease YbeY (162 aa).

The Zn(2+) site is built by histidine 117, histidine 121, and histidine 127.

It belongs to the endoribonuclease YbeY family. It depends on Zn(2+) as a cofactor.

The protein localises to the cytoplasm. Its function is as follows. Single strand-specific metallo-endoribonuclease involved in late-stage 70S ribosome quality control and in maturation of the 3' terminus of the 16S rRNA. This chain is Endoribonuclease YbeY, found in Francisella tularensis subsp. tularensis (strain WY96-3418).